A 569-amino-acid polypeptide reads, in one-letter code: Probable ABC transporter permease protein y4fN (569 aa).

Helical transmembrane passes span 10 to 30 (VFYW…LLVP), 68 to 88 (VWMT…QVAV), 98 to 118 (GFLK…AAAG), 121 to 141 (FTYG…PSLP), 145 to 165 (FIGW…FHFL), 196 to 216 (VVLP…LITA), 247 to 267 (PDMA…LILL), 304 to 324 (LAYL…LFSF), 363 to 383 (MSSI…PIMV), 395 to 415 (ICFV…LIVA), 426 to 446 (LVLL…SLPL), 480 to 500 (VVLP…FNNL), and 534 to 554 (AAVS…VILI). The 205-residue stretch at 64–268 (LWNTVWMTAA…LVLMGLILLS (205 aa)) folds into the ABC transmembrane type-1 1 domain. Residues 357-551 (FFNSMLMSSI…TLIMAFSLAV (195 aa)) enclose the ABC transmembrane type-1 2 domain.

It belongs to the binding-protein-dependent transport system permease family. CysTW subfamily.

It localises to the cell inner membrane. Probably part of the binding-protein-dependent transport system y4fNOP. Probably responsible for the translocation of the substrate across the membrane. In Sinorhizobium fredii (strain NBRC 101917 / NGR234), this protein is Probable ABC transporter permease protein y4fN.